Consider the following 274-residue polypeptide: 4-diphosphocytidyl-2-C-methyl-D-erythritol kinase (274 aa).

K8 is a catalytic residue. An ATP-binding site is contributed by 94-104 (PSGAGLGGGSA). D136 is an active-site residue.

The protein belongs to the GHMP kinase family. IspE subfamily.

The catalysed reaction is 4-CDP-2-C-methyl-D-erythritol + ATP = 4-CDP-2-C-methyl-D-erythritol 2-phosphate + ADP + H(+). It functions in the pathway isoprenoid biosynthesis; isopentenyl diphosphate biosynthesis via DXP pathway; isopentenyl diphosphate from 1-deoxy-D-xylulose 5-phosphate: step 3/6. Catalyzes the phosphorylation of the position 2 hydroxy group of 4-diphosphocytidyl-2C-methyl-D-erythritol. The polypeptide is 4-diphosphocytidyl-2-C-methyl-D-erythritol kinase (Bacteroides fragilis (strain YCH46)).